Consider the following 154-residue polypeptide: MKESPVIKLRELLNLLPHRYPFLLVDKVLSYDLERRSIVAQKNVTINEPFFVGHFPEAPIMPGVLILESLAQAAGVLLGLVLENDRNKRLALFLGIHKAKFRQAVKPGDILTLSAEFSLISSKGGKASARACVGSQVAAEGELSFALVDKKSLD.

Residue His54 is part of the active site.

This sequence belongs to the thioester dehydratase family. FabZ subfamily.

Its subcellular location is the cytoplasm. The enzyme catalyses a (3R)-hydroxyacyl-[ACP] = a (2E)-enoyl-[ACP] + H2O. Functionally, involved in unsaturated fatty acids biosynthesis. Catalyzes the dehydration of short chain beta-hydroxyacyl-ACPs and long chain saturated and unsaturated beta-hydroxyacyl-ACPs. This is 3-hydroxyacyl-[acyl-carrier-protein] dehydratase FabZ from Chlamydia abortus (strain DSM 27085 / S26/3) (Chlamydophila abortus).